A 237-amino-acid chain; its full sequence is Endonuclease V (237 aa).

Asp-46 and Asp-114 together coordinate Mg(2+).

It belongs to the endonuclease V family. The cofactor is Mg(2+).

The protein resides in the cytoplasm. The enzyme catalyses Endonucleolytic cleavage at apurinic or apyrimidinic sites to products with a 5'-phosphate.. In terms of biological role, DNA repair enzyme involved in the repair of deaminated bases. Selectively cleaves double-stranded DNA at the second phosphodiester bond 3' to a deoxyinosine leaving behind the intact lesion on the nicked DNA. In Xanthomonas axonopodis pv. citri (strain 306), this protein is Endonuclease V.